Reading from the N-terminus, the 226-residue chain is uncharacterized protein (226 aa).

A helical membrane pass occupies residues 203–225; sequence FGISDIYTSTLSFGLIISLFYLL.

It is found in the membrane. This is an uncharacterized protein from Acanthamoeba polyphaga (Amoeba).